We begin with the raw amino-acid sequence, 208 residues long: MELKVLTTAGTESGEVVTLRDDIFGAEVSEHAVYLDVKSILANRRQGTHKSKTRAEVRGGGRKPYRQKGTGNARQGSTRSPLMVGGGTIFGPTPHGYDQKVNKKVKALARRSAFSSKAQDGRILVVEDFKLDEIKTKPFAAILKNLGLDEKKTLMLTPEYNVIITRSGKNIQTVNIMSAEKASTYDILNSHTVLFQKAALKKIEETLG.

Positions 45–96 are disordered; the sequence is RQGTHKSKTRAEVRGGGRKPYRQKGTGNARQGSTRSPLMVGGGTIFGPTPHG. The span at 69–80 shows a compositional bias: polar residues; it reads GTGNARQGSTRS.

The protein belongs to the universal ribosomal protein uL4 family. In terms of assembly, part of the 50S ribosomal subunit.

Its function is as follows. One of the primary rRNA binding proteins, this protein initially binds near the 5'-end of the 23S rRNA. It is important during the early stages of 50S assembly. It makes multiple contacts with different domains of the 23S rRNA in the assembled 50S subunit and ribosome. In terms of biological role, forms part of the polypeptide exit tunnel. This is Large ribosomal subunit protein uL4 from Chlorobium phaeovibrioides (strain DSM 265 / 1930) (Prosthecochloris vibrioformis (strain DSM 265)).